The following is an 845-amino-acid chain: Beta-mannosidase B (845 aa).

Residue glutamate 432 is the Proton donor of the active site. 2 N-linked (GlcNAc...) asparagine glycosylation sites follow: asparagine 717 and asparagine 723.

It belongs to the glycosyl hydrolase 2 family. Beta-mannosidase B subfamily.

It carries out the reaction Hydrolysis of terminal, non-reducing beta-D-mannose residues in beta-D-mannosides.. It participates in glycan metabolism; N-glycan degradation. Its function is as follows. Exoglycosidase that cleaves the single beta-linked mannose residue from the non-reducing end of beta-mannosidic oligosaccharides of various complexity and length. Prefers mannobiose over mannotriose and has no activity against polymeric mannan. Is also severely restricted by galactosyl substitutions at the +1 subsite. This Aspergillus clavatus (strain ATCC 1007 / CBS 513.65 / DSM 816 / NCTC 3887 / NRRL 1 / QM 1276 / 107) protein is Beta-mannosidase B (mndB).